We begin with the raw amino-acid sequence, 958 residues long: Atromentin synthetase greA (958 aa).

The interval 60 to 465 (SIQTKTFSAF…SGRIKDTVIV (406 aa)) is adenylation (A) domain. One can recognise a Carrier domain in the interval 597 to 675 (APSTETEKAL…SLANYVNALL (79 aa)). Residues 602–672 (TEKALAKIYA…VVSSLANYVN (71 aa)) form a thiolation and peptide carrier (T) domain region. Ser-634 carries the post-translational modification O-(pantetheine 4'-phosphoryl)serine. Residues 698–946 (PIFFVHPGVG…MDFDHVPQFQ (249 aa)) form a thioesterase (TE) domain region.

This sequence belongs to the ATP-dependent AMP-binding enzyme family.

The protein operates within secondary metabolite biosynthesis. Its function is as follows. An L-tyrosine:2-oxoglutarate aminotransferase and atromentin synthetase greA catalyze consecutive steps to turn over L-tyrosine into atromentin, which represents the generic precursor molecule for the entire terphenylquinone and pulvinic acid family of pigments, which are widely distributed secondary metabolites in homobasidiomycetes. The first step catalyzed by the aminotransferase converts L-tyrosine in to 4-hydroxyphenylpyruvate (4-HPP). Adenylation of two 4-HPP monomers by the greA adenylation (A) domain, covalent tethering of the monomers as a thioester and oxoester onto the greA thiolation (T) and thioesterase (TE) domains, respectively, and symmetric C-C-bond formation between two monomers catalyzed by the greA TE domain leads to atromentin. In Suillus grevillei (Larch bolete), this protein is Atromentin synthetase greA (greA).